The chain runs to 324 residues: Galactosylgalactosylxylosylprotein 3-beta-glucuronosyltransferase 2 (324 aa).

Topologically, residues 1-2 (MK) are cytoplasmic. Residues 3-23 (SALCSRFFILLPWILIVIIML) traverse the membrane as a helical; Signal-anchor for type II membrane protein segment. The Lumenal portion of the chain corresponds to 24–324 (DVDPRRPAPQ…YHLDTVNIEV (301 aa)). The tract at residues 50–78 (SRVPLRRSSPGRDAAEKRNESRPQLQPEP) is disordered. An N-linked (GlcNAc...) asparagine glycan is attached at Asn-68. Residues 88–90 (PTY), Asp-119, Arg-156, Arg-161, and 186–188 (DDD) contribute to the UDP-alpha-D-glucuronate site. A Mn(2+)-binding site is contributed by Asp-188. The interaction with galactose moiety of substrate glycoprotein stretch occupies residues 235–244 (WREDRPFAID). Glu-274 (proton donor/acceptor) is an active-site residue. An N-linked (GlcNAc...) asparagine glycan is attached at Asn-293. 301–303 (HTR) lines the UDP-alpha-D-glucuronate pocket.

Belongs to the glycosyltransferase 43 family. In terms of assembly, homodimer. It depends on Mn(2+) as a cofactor. As to expression, expressed in brain, but not in liver and kidney.

It localises to the golgi apparatus membrane. The catalysed reaction is 3-O-(beta-D-galactosyl-(1-&gt;3)-beta-D-galactosyl-(1-&gt;4)-beta-D-xylosyl)-L-seryl-[protein] + UDP-alpha-D-glucuronate = 3-O-(beta-D-GlcA-(1-&gt;3)-beta-D-Gal-(1-&gt;3)-beta-D-Gal-(1-&gt;4)-beta-D-Xyl)-L-seryl-[protein] + UDP + H(+). It functions in the pathway protein modification; protein glycosylation. In terms of biological role, involved in the biosynthesis of L2/HNK-1 carbohydrate epitope on both glycolipids and glycoproteins. This is Galactosylgalactosylxylosylprotein 3-beta-glucuronosyltransferase 2 (B3gat2) from Mus musculus (Mouse).